A 298-amino-acid chain; its full sequence is Junctional adhesion molecule B (298 aa).

The N-terminal stretch at 1-28 is a signal peptide; sequence MARRSRHRLLLLLLRYLVVALGYHKAYG. The Extracellular portion of the chain corresponds to 29–238; sequence FSAPKDQQVV…RMQVDDLNIS (210 aa). In terms of domain architecture, Ig-like V-type spans 32–127; that stretch reads PKDQQVVTAV…GQNLEEDTVT (96 aa). 2 disulfide bridges follow: Cys-50–Cys-109 and Cys-155–Cys-214. 3 N-linked (GlcNAc...) asparagine glycosylation sites follow: Asn-98, Asn-187, and Asn-236. An Ig-like C2-type domain is found at 134-238; the sequence is PAVPSCEVPS…RMQVDDLNIS (105 aa). A helical membrane pass occupies residues 239-259; sequence GIIAAVVVVALVISVCGLGVC. Residues 260–298 lie on the Cytoplasmic side of the membrane; sequence YAQRKGYFSKETSFQKSNSSSKATTMSENDFKHTKSFII.

This sequence belongs to the immunoglobulin superfamily. As to expression, highly expressed in heart, placenta, lung, foreskin and lymph node. Prominently expressed on high endothelial venules and also present on the endothelia of other vessels (at protein level). Also expressed in the brain in the caudate nuclei.

The protein localises to the cell membrane. It is found in the cell junction. The protein resides in the tight junction. Functionally, junctional adhesion protein that mediates heterotypic cell-cell interactions with its cognate receptor JAM3 to regulate different cellular processes. Plays a role in homing and mobilization of hematopoietic stem and progenitor cells within the bone marrow. At the surface of bone marrow stromal cells, it contributes to the retention of the hematopoietic stem and progenitor cells expressing JAM3. Plays a central role in leukocytes extravasation by facilitating not only transmigration but also tethering and rolling of leukocytes along the endothelium. Tethering and rolling of leukocytes are dependent on the binding by JAM2 of the integrin alpha-4/beta-1. Plays a role in spermatogenesis where JAM2 and JAM3, which are respectively expressed by Sertoli and germ cells, mediate an interaction between both cell types and play an essential role in the anchorage of germ cells onto Sertoli cells and the assembly of cell polarity complexes during spermatid differentiation. Also functions as an inhibitory somatodendritic cue that prevents the myelination of non-axonal parts of neurons. During myogenesis, it is involved in myocyte fusion. May also play a role in angiogenesis. The sequence is that of Junctional adhesion molecule B from Homo sapiens (Human).